Here is a 261-residue protein sequence, read N- to C-terminus: Global transcriptional regulator CodY (261 aa).

The interval 1–159 (MPNLLEKTRK…ASTVVGIQLL (159 aa)) is GAF domain. Positions 207-226 (ASVIADRIGITRSVIVNALR) form a DNA-binding region, H-T-H motif.

This sequence belongs to the CodY family.

Its subcellular location is the cytoplasm. In terms of biological role, DNA-binding global transcriptional regulator which is involved in the adaptive response to starvation and acts by directly or indirectly controlling the expression of numerous genes in response to nutrient availability. During rapid exponential growth, CodY is highly active and represses genes whose products allow adaptation to nutrient depletion. The sequence is that of Global transcriptional regulator CodY from Streptococcus agalactiae serotype Ia (strain ATCC 27591 / A909 / CDC SS700).